The sequence spans 316 residues: Ribose-phosphate pyrophosphokinase (316 aa).

Residues 37–39 (DGE) and 96–97 (RQ) contribute to the ATP site. The Mg(2+) site is built by histidine 130 and aspartate 171. Residue lysine 194 is part of the active site. Residues arginine 196 and aspartate 221 each contribute to the D-ribose 5-phosphate site.

This sequence belongs to the ribose-phosphate pyrophosphokinase family. Class I subfamily. In terms of assembly, homohexamer. The cofactor is Mg(2+).

It is found in the cytoplasm. It carries out the reaction D-ribose 5-phosphate + ATP = 5-phospho-alpha-D-ribose 1-diphosphate + AMP + H(+). Its pathway is metabolic intermediate biosynthesis; 5-phospho-alpha-D-ribose 1-diphosphate biosynthesis; 5-phospho-alpha-D-ribose 1-diphosphate from D-ribose 5-phosphate (route I): step 1/1. Involved in the biosynthesis of the central metabolite phospho-alpha-D-ribosyl-1-pyrophosphate (PRPP) via the transfer of pyrophosphoryl group from ATP to 1-hydroxyl of ribose-5-phosphate (Rib-5-P). The protein is Ribose-phosphate pyrophosphokinase of Rhodopirellula baltica (strain DSM 10527 / NCIMB 13988 / SH1).